The chain runs to 124 residues: Putative outer membrane protein TC_0858 (124 aa).

An N-terminal signal peptide occupies residues 1–31 (MGKTKKRKQSITLIEMMVVITLIGIISGALA).

The protein resides in the cell outer membrane. The polypeptide is Putative outer membrane protein TC_0858 (Chlamydia muridarum (strain MoPn / Nigg)).